We begin with the raw amino-acid sequence, 191 residues long: Ribosomal RNA small subunit methyltransferase G (191 aa).

S-adenosyl-L-methionine contacts are provided by residues Gly-59, 111–112, and Arg-124; that span reads IE.

Belongs to the methyltransferase superfamily. RNA methyltransferase RsmG family.

It localises to the cytoplasm. Functionally, specifically methylates the N7 position of a guanine in 16S rRNA. This chain is Ribosomal RNA small subunit methyltransferase G, found in Mycoplasma pneumoniae (strain ATCC 29342 / M129 / Subtype 1) (Mycoplasmoides pneumoniae).